Here is a 592-residue protein sequence, read N- to C-terminus: UPF0329 protein ECU01_0110/ECU01_1500/ECU08_0040 (592 aa).

Basic and acidic residues-rich tracts occupy residues 306–339 (RQRR…SKEK) and 353–362 (EAKEEEKKES). A disordered region spans residues 306–404 (RQRRREREIE…RKRYKIHRRV (99 aa)).

This sequence belongs to the UPF0329 family.

In Encephalitozoon cuniculi (strain GB-M1) (Microsporidian parasite), this protein is UPF0329 protein ECU01_0110/ECU01_1500/ECU08_0040.